Reading from the N-terminus, the 173-residue chain is Succinate dehydrogenase assembly factor 3, mitochondrial (173 aa).

A mitochondrion-targeting transit peptide spans 1–59; that stretch reads MFRPSTSLALRSTLRQLASASNQPIPPGSEINAVKRTVATILPPIRLYRRIIRAHRRLD. The tract at residues 149–173 is disordered; sequence FPPEKQRELAEKAAADAGLSVKKDE. The span at 152-162 shows a compositional bias: basic and acidic residues; that stretch reads EKQRELAEKAA.

It belongs to the complex I LYR family. SDHAF3 subfamily. Interacts with the iron-sulfur protein subunit within the SDH catalytic dimer.

The protein resides in the mitochondrion matrix. Functionally, plays an essential role in the assembly of succinate dehydrogenase (SDH), an enzyme complex (also referred to as respiratory complex II) that is a component of both the tricarboxylic acid (TCA) cycle and the mitochondrial electron transport chain, and which couples the oxidation of succinate to fumarate with the reduction of ubiquinone (coenzyme Q) to ubiquinol. Promotes maturation of the iron-sulfur protein subunit of the SDH catalytic dimer, protecting it from the deleterious effects of oxidants. May act together with SDHAF1. In Mycosarcoma maydis (Corn smut fungus), this protein is Succinate dehydrogenase assembly factor 3, mitochondrial.